We begin with the raw amino-acid sequence, 418 residues long: Putative F-box protein At3g23950 (418 aa).

Residues 1 to 42 (MNIPPELTFEVLVRLPLKSLARFRSMCKEWKLVIDSEFFRDC) form the F-box domain.

The polypeptide is Putative F-box protein At3g23950 (Arabidopsis thaliana (Mouse-ear cress)).